A 228-amino-acid chain; its full sequence is Orotidine 5'-phosphate decarboxylase (228 aa).

Residues aspartate 20, lysine 42, aspartate 70–threonine 79, serine 127, proline 180–glycine 190, glycine 202, and arginine 203 each bind substrate. Lysine 72 acts as the Proton donor in catalysis.

This sequence belongs to the OMP decarboxylase family. Type 1 subfamily. Homodimer.

The enzyme catalyses orotidine 5'-phosphate + H(+) = UMP + CO2. It functions in the pathway pyrimidine metabolism; UMP biosynthesis via de novo pathway; UMP from orotate: step 2/2. Catalyzes the decarboxylation of orotidine 5'-monophosphate (OMP) to uridine 5'-monophosphate (UMP). The chain is Orotidine 5'-phosphate decarboxylase (pyrF) from Methanothermobacter thermautotrophicus (strain ATCC 29096 / DSM 1053 / JCM 10044 / NBRC 100330 / Delta H) (Methanobacterium thermoautotrophicum).